The chain runs to 396 residues: Elongation factor Tu (396 aa).

The 196-residue stretch at 10–205 (KPHVNIGTIG…AVDESIPDPV (196 aa)) folds into the tr-type G domain. Positions 19–26 (GHVDHGKT) are G1. 19–26 (GHVDHGKT) serves as a coordination point for GTP. Thr26 contributes to the Mg(2+) binding site. Residues 62-66 (GITIN) form a G2 region. Residues 83 to 86 (DAPG) are G3. GTP is bound by residues 83-87 (DAPGH) and 138-141 (NKAD). The G4 stretch occupies residues 138–141 (NKAD). Residues 175–177 (SAL) form a G5 region.

This sequence belongs to the TRAFAC class translation factor GTPase superfamily. Classic translation factor GTPase family. EF-Tu/EF-1A subfamily. As to quaternary structure, monomer.

The protein localises to the cytoplasm. It carries out the reaction GTP + H2O = GDP + phosphate + H(+). In terms of biological role, GTP hydrolase that promotes the GTP-dependent binding of aminoacyl-tRNA to the A-site of ribosomes during protein biosynthesis. This is Elongation factor Tu from Rhodococcus jostii (strain RHA1).